A 507-amino-acid polypeptide reads, in one-letter code: Rhamnogalacturonase A (507 aa).

A signal peptide spans 1–21; that stretch reads MYVSRLLLFLAPLLVKGQLSG. A disulfide bridge links cysteine 38 with cysteine 64. The active-site Proton donor is aspartate 215. Cysteine 217 and cysteine 234 are joined by a disulfide. N-linked (GlcNAc...) asparagine glycosylation is present at asparagine 235. Histidine 290 is an active-site residue. A glycan (N-linked (GlcNAc...) asparagine) is linked at asparagine 317. Disulfide bonds link cysteine 340-cysteine 346 and cysteine 368-cysteine 377. A compositionally biased stretch (low complexity) spans 462–491; that stretch reads SPATSSPTATSTAISSVDPVSAATTTATSH. Positions 462 to 507 are disordered; the sequence is SPATSSPTATSTAISSVDPVSAATTTATSHGHGKSHHKHQCRAHRH. Basic residues predominate over residues 492–507; sequence GHGKSHHKHQCRAHRH.

This sequence belongs to the glycosyl hydrolase 28 family.

Its subcellular location is the secreted. It catalyses the reaction Endohydrolysis of alpha-D-GalA-(1-&gt;2)-alpha-L-Rha glycosidic bond in the rhamnogalacturonan I backbone with initial inversion of anomeric configuration releasing oligosaccharides with beta-D-GalA at the reducing end.. Functionally, pectinolytic enzymes consist of four classes of enzymes: pectine lyase, polygalacturonase, pectin methylesterase and rhamnogalacturonase. Hydrolyzes alpha-D-galacturonopyranosyl-(1,2)-alpha-L-rhamnopyranosyl linkages in the backbone of the hairy regions of pectins. Active against linseed rhamnogalacturonan. This Emericella nidulans (strain FGSC A4 / ATCC 38163 / CBS 112.46 / NRRL 194 / M139) (Aspergillus nidulans) protein is Rhamnogalacturonase A (rhgA).